A 1088-amino-acid polypeptide reads, in one-letter code: RNA-directed RNA polymerase (1088 aa).

The 187-residue stretch at 501–687 (LSYGDVTRFL…AKRYIAGGKI (187 aa)) folds into the RdRp catalytic domain.

This sequence belongs to the reoviridae RNA-directed RNA polymerase family. Interacts with VP3 (Potential). Interacts with VP2; this interaction activates VP1. Interacts with NSP5; this interaction is probably necessary for the formation of functional virus factories. Interacts with NSP2; this interaction is weak. Mg(2+) serves as cofactor.

Its subcellular location is the virion. The catalysed reaction is RNA(n) + a ribonucleoside 5'-triphosphate = RNA(n+1) + diphosphate. RNA-directed RNA polymerase that is involved in both transcription and genome replication. Together with VP3 capping enzyme, forms an enzyme complex positioned near the channels situated at each of the five-fold vertices of the core. Following infection, the outermost layer of the virus is lost, leaving a double-layered particle (DLP) made up of the core and VP6 shell. VP1 then catalyzes the transcription of fully conservative plus-strand genomic RNAs that are extruded through the DLP's channels into the cytoplasm where they function as mRNAs for translation of viral proteins. One copy of each of the viral (+)RNAs is also recruited during core assembly, together with newly synthesized polymerase complexes and VP2. The polymerase of these novo-formed particles catalyzes the synthesis of complementary minus-strands leading to dsRNA formation. To do so, the polymerase specifically recognizes and binds 4 bases 5'-UGUG-3' in the conserved 3'-sequence of plus-strand RNA templates. VP2 presumably activates the autoinhibited VP1-RNA complex to coordinate packaging and genome replication. Once dsRNA synthesis is complete, the polymerase switches to the transcriptional mode, thus providing secondary transcription. This chain is RNA-directed RNA polymerase, found in Homo sapiens (Human).